The following is a 458-amino-acid chain: Sphingomyelinase DDB_G0288017 (458 aa).

Positions 91-111 (NKKAKSPPPPSSLKQQNLHNN) are disordered. Glu-135 lines the Mg(2+) pocket. His-447 acts as the Proton acceptor in catalysis.

The protein belongs to the neutral sphingomyelinase family. It depends on Mg(2+) as a cofactor.

It catalyses the reaction a sphingomyelin + H2O = phosphocholine + an N-acylsphing-4-enine + H(+). It participates in lipid metabolism; sphingolipid metabolism. In terms of biological role, catalyzes the hydrolysis of sphingomyelin to form ceramide and phosphocholine. In Dictyostelium discoideum (Social amoeba), this protein is Sphingomyelinase DDB_G0288017.